Here is a 1252-residue protein sequence, read N- to C-terminus: DNA-directed RNA polymerase subunit beta (1252 aa).

This sequence belongs to the RNA polymerase beta chain family. In terms of assembly, the RNAP catalytic core consists of 2 alpha, 1 beta, 1 beta' and 1 omega subunit. When a sigma factor is associated with the core the holoenzyme is formed, which can initiate transcription.

It carries out the reaction RNA(n) + a ribonucleoside 5'-triphosphate = RNA(n+1) + diphosphate. In terms of biological role, DNA-dependent RNA polymerase catalyzes the transcription of DNA into RNA using the four ribonucleoside triphosphates as substrates. The sequence is that of DNA-directed RNA polymerase subunit beta from Chlamydia pneumoniae (Chlamydophila pneumoniae).